The sequence spans 280 residues: Dermonecrotic toxin LgSicTox-alphaIC1 (280 aa).

H12 is a catalytic residue. The Mg(2+) site is built by E32 and D34. The Nucleophile role is filled by H48. Intrachain disulfides connect C52–C58 and C54–C197. D92 is a Mg(2+) binding site.

Belongs to the arthropod phospholipase D family. Class II subfamily. Mg(2+) serves as cofactor. In terms of tissue distribution, expressed by the venom gland.

The protein localises to the secreted. The enzyme catalyses an N-(acyl)-sphingosylphosphocholine = an N-(acyl)-sphingosyl-1,3-cyclic phosphate + choline. It carries out the reaction an N-(acyl)-sphingosylphosphoethanolamine = an N-(acyl)-sphingosyl-1,3-cyclic phosphate + ethanolamine. It catalyses the reaction a 1-acyl-sn-glycero-3-phosphocholine = a 1-acyl-sn-glycero-2,3-cyclic phosphate + choline. The catalysed reaction is a 1-acyl-sn-glycero-3-phosphoethanolamine = a 1-acyl-sn-glycero-2,3-cyclic phosphate + ethanolamine. In terms of biological role, dermonecrotic toxins cleave the phosphodiester linkage between the phosphate and headgroup of certain phospholipids (sphingolipid and lysolipid substrates), forming an alcohol (often choline) and a cyclic phosphate. This toxin acts on sphingomyelin (SM) with high activity. It may also act on ceramide phosphoethanolamine (CPE), lysophosphatidylcholine (LPC) and lysophosphatidylethanolamine (LPE), but not on lysophosphatidylserine (LPS), and lysophosphatidylglycerol (LPG). It acts by transphosphatidylation, releasing exclusively cyclic phosphate products as second products. Induces platelet aggregation in platelet rich plasma, but not in washed platelet, indicating that this activity is dependent on plasma components. Also induces hemolysis. In vivo, the recombinant protein evokes an intense inflammatory reaction and dermonecrosis, similar to those induced by L.gaucho total venom. Is a good immunogen, capable of inducing immunoprotection in test animals. Anionic antimicrobial peptide that shows antimicrobial activity against Gram-negative bacteria (MIC=1.15-4.6 uM) (tested on E.coli, P.aeruginosa, and E.cloacae), but not on Gram-negative bacteria (M.luteus, S.aureus, and B.subtilis), neither on fungi and yeasts (A.niger, C.albicans and C.krusei). Does not show hemolytic effects against human erythrocytes, and has no cytotoxic effects against human cervical carcinoma cells (HeLa). The polypeptide is Dermonecrotic toxin LgSicTox-alphaIC1 (Loxosceles gaucho (Spider)).